A 30-amino-acid polypeptide reads, in one-letter code: GIPCGESCVYIPCTVTALAGCKCKSKVCYN.

A cross-link (cyclopeptide (Gly-Asn)) is located at residues 1 to 30; it reads GIPCGESCVYIPCTVTALAGCKCKSKVCYN. Disulfide bonds link Cys-4–Cys-21, Cys-8–Cys-23, and Cys-13–Cys-28.

This is a cyclic peptide. Expressed in leaves, petals and petioles but not in roots and runners (at protein level).

Its function is as follows. Probably participates in a plant defense mechanism. In Viola odorata (Sweet violet), this protein is Cycloviolacin-O18.